A 269-amino-acid polypeptide reads, in one-letter code: Troponin T, fast skeletal muscle (269 aa).

Residues 1 to 23 (MSDEEVEQVEEQYEEEEEAQEEA) are compositionally biased toward acidic residues. The disordered stretch occupies residues 1 to 72 (MSDEEVEQVE…EKVDFDDIQK (72 aa)). Ser2 carries the N-acetylserine modification. Ser2 is modified (phosphoserine). The span at 24-34 (AEVHEEVHEPE) shows a compositional bias: basic and acidic residues. Residues 35–47 (EVQEDTAEEDAEE) are compositionally biased toward acidic residues. Over residues 60-72 (PEGEKVDFDDIQK) the composition is skewed to basic and acidic residues. Residue Ser88 is modified to Phosphoserine. The segment covering 111–153 (RAERAEQQRIRAEKERERQNRLAEEKARREEEDAKRRAEDDLK) has biased composition (basic and acidic residues). Residues 111-158 (RAERAEQQRIRAEKERERQNRLAEEKARREEEDAKRRAEDDLKKKKAL) are disordered. Ser159, Ser166, and Ser167 each carry phosphoserine. Residues 245 to 269 (RIDQAQKHSKKAGTPAKGKVGGRWK) are disordered.

Belongs to the troponin T family. In terms of tissue distribution, in fetal and adult fast skeletal muscles, with a higher level expression in fetal than in adult muscle.

Troponin T is the tropomyosin-binding subunit of troponin, the thin filament regulatory complex which confers calcium-sensitivity to striated muscle actomyosin ATPase activity. This is Troponin T, fast skeletal muscle (TNNT3) from Homo sapiens (Human).